Here is a 396-residue protein sequence, read N- to C-terminus: Elongation factor Tu 2 (396 aa).

The 197-residue stretch at 10 to 206 (KPHVNVGTIG…ALDTYIPTPE (197 aa)) folds into the tr-type G domain. The interval 19 to 26 (GHVDHGKT) is G1. 19 to 26 (GHVDHGKT) contacts GTP. Threonine 26 contributes to the Mg(2+) binding site. Residues 60 to 64 (GITIN) are G2. Residues 81–84 (DCPG) are G3. GTP contacts are provided by residues 81 to 85 (DCPGH) and 136 to 139 (NKAD). The segment at 136–139 (NKAD) is G4. The segment at 174 to 176 (SAK) is G5.

The protein belongs to the TRAFAC class translation factor GTPase superfamily. Classic translation factor GTPase family. EF-Tu/EF-1A subfamily. In terms of assembly, monomer.

It is found in the cytoplasm. The catalysed reaction is GTP + H2O = GDP + phosphate + H(+). In terms of biological role, GTP hydrolase that promotes the GTP-dependent binding of aminoacyl-tRNA to the A-site of ribosomes during protein biosynthesis. This chain is Elongation factor Tu 2, found in Methylobacillus flagellatus (strain ATCC 51484 / DSM 6875 / VKM B-1610 / KT).